Reading from the N-terminus, the 875-residue chain is MSKSTAEIRQAFLDFFHSKGHQVVSSSTLVPNNDPTLLFTNAGMNQFKDVFLGLDKRAYSRATTSQRCVRAGGKHNDLENVGYTARHHTFFEMLGNFSFGDYFKHDAINFAWELLTSEQWFNLPKEKLWVTVYETDDEAYNIWANEVGVPHERIIRIGDNKGGAFASDNFWQMGDTGPCGPCSEIFFDHGDHIWGGPPGSAEEDGDRYIEIWNIVFMQFNRQSDGTMLPLPKPSVDTGMGLERIAAVLQHVNSNYEIDLFRDLIAAVADVTGATDLSSKSLRVIADHIRSCAFLISDGVIPSNENRGYVLRRIIRRAIRHGNMLGAKETFFYKLVAPLIAVMGPAAAELKQQQAMVEQVLKTEEEQFARTLERGLALLDDELSKLTGDTLDGETAFRLYDTYGFPVDLTADVCRERNLKVDEAGFEQAMEAQRRRARESSGFGADYNSLIRVDSASQFSGYDHVQQHATVTALFRNGEAVDEIHAGEEAVVVLNRTPFYGESGGQVGDKGELKNATATFSVTDTQKYGQAIGHVGILTTGTLRVNHSVEALVDVVRRNRIRLNHSATHLLHAALRNVLGEHVAQKGSLVNDKYLRFDFSHFEAMKPEQIRLVEDLVNEQIRRNMPVQTEVMELDAAKEKGAMALFGEKYDDQVRVLTMGDFSTELCGGTHASRTGDIGLFRILTESGTAAGIRRIEAVTGEGAIALLHQQSDLLQDVAHLVKGDIHNLADKVRAVLDRSKMLERELQQLKDQQAAQESASLSSSAKLINGVKLLVSQLDNVEPKMLRTMVDDLKNQLGSAIIVLATTADDKVSLIVGVTKDLTGKVKAGELIADIAQQVGGKGGGRPDMAQAGGTDVQALPAALASVEAWVASRM.

Positions 564, 568, 666, and 670 each coordinate Zn(2+).

Belongs to the class-II aminoacyl-tRNA synthetase family. Homotetramer. Requires Zn(2+) as cofactor.

Its subcellular location is the cytoplasm. The catalysed reaction is tRNA(Ala) + L-alanine + ATP = L-alanyl-tRNA(Ala) + AMP + diphosphate. Functionally, catalyzes the attachment of alanine to tRNA(Ala) in a two-step reaction: alanine is first activated by ATP to form Ala-AMP and then transferred to the acceptor end of tRNA(Ala). Also edits incorrectly charged Ser-tRNA(Ala) and Gly-tRNA(Ala) via its editing domain. The chain is Alanine--tRNA ligase from Yersinia pestis bv. Antiqua (strain Angola).